The chain runs to 873 residues: Kinase suppressor of Ras 1 (873 aa).

3 disordered regions span residues 1 to 24 (MDRA…GAAA), 174 to 230 (EHKM…PGLS), and 251 to 281 (LHSF…PSRK). Residues 1–170 (MDRAALRAAA…ALTCLRKVTG (170 aa)) form a mediates association with membranes region. Positions 206–216 (ASTQGPRSISV) are enriched in polar residues. Residues Thr256 and Thr260 each carry the phosphothreonine modification. Phosphoserine; by MARK3 is present on Ser297. Position 320 is a phosphoserine (Ser320). The segment at 333–377 (THRFSTKSWLSQVCNVCQKSMIFGVKCKHCRLKCHNKCTKEAPAC) adopts a Phorbol-ester/DAG-type zinc-finger fold. His334 provides a ligand contact to Zn(2+). Ser337 carries the phosphoserine modification. 7 residues coordinate Zn(2+): Cys346, Cys349, Cys359, Cys362, His367, Cys370, and Cys377. Ser392 carries the post-translational modification Phosphoserine; by MARK3. At Thr411 the chain carries Phosphothreonine. Disordered stretches follow at residues 416-473 (LTKK…RFSF) and 506-544 (HEAE…PISR). The segment covering 429-458 (SSSNPSSTTSSTPSSPAPFLTSSNPSSATT) has biased composition (low complexity). Positions 506 to 519 (HEAEAEEPEAGKSE) are enriched in basic and acidic residues. A Phosphoserine modification is found at Ser518. Over residues 520–530 (AEDDEEDEVDD) the composition is skewed to acidic residues. One can recognise a Protein kinase domain in the interval 563 to 833 (VELGEPIGQG…MDMLERLPKL (271 aa)). 569–577 (IGQGRWGRV) serves as a coordination point for ATP. Asp683 serves as the catalytic Proton acceptor. Residues Lys685 and Asp700 each contribute to the ATP site. Phosphoserine is present on Ser838.

It belongs to the protein kinase superfamily. TKL Ser/Thr protein kinase family. Homodimer. Heterodimerizes (via N-terminus) with BRAF (via N-terminus) in a MAP2K1/MEK1 or MAP2K2/MEK2-dependent manner. Interacts with MAP2K1/MEK1 and MAP2K2/MEK2. Binding to MAP2K1/MEK1 releases the intramolecular inhibitory interaction between KSR1 N-terminus and kinase domains which is required for the subsequent RSK1 dimerization with BRAF. Identified in a complex with AKAP13, MAP2K1 and BRAF. Interacts with AKAP13 and BRAF. Interacts with RAF and MAPK/ERK, in a Ras-dependent manner. Interacts with 14-3-3 proteins including YWHAB. Interacts with HSP90AA1/HSP90, YWHAE/14-3-3 and CDC37. The binding of 14-3-3 proteins to phosphorylated KSR1 prevents the membrane localization. Interacts with MARK3/C-TAK1. Interacts with PPP2R1A and PPP2CA. Interacts with VRK2. Phosphorylated on Ser-297 and, to a higher extent, on Ser-392 by MARK3. Dephosphorylated on Ser-392 by PPP2CA. Phosphorylated KSR1 is cytoplasmic and dephosphorylated KSR1 is membrane-associated. Phosphorylated by PKA at Ser-838. Phosphorylation at Ser-838 is required for cAMP-dependent activation of MAPK1 and/or MAPK3. In terms of tissue distribution, expressed in brain, spleen and testis. Isoform 1 is highly expressed spleen and weakly in testis, and isoform 2 is highly expressed in brain and weakly in testis.

Its subcellular location is the cytoplasm. It is found in the membrane. The protein resides in the cell membrane. It localises to the cell projection. The protein localises to the ruffle membrane. Its subcellular location is the endoplasmic reticulum membrane. It carries out the reaction L-seryl-[protein] + ATP = O-phospho-L-seryl-[protein] + ADP + H(+). The catalysed reaction is L-threonyl-[protein] + ATP = O-phospho-L-threonyl-[protein] + ADP + H(+). In terms of biological role, part of a multiprotein signaling complex which promotes phosphorylation of Raf family members and activation of downstream MAP kinases. Independently of its kinase activity, acts as MAP2K1/MEK1 and MAP2K2/MEK2-dependent allosteric activator of BRAF; upon binding to MAP2K1/MEK1 or MAP2K2/MEK2, dimerizes with BRAF and promotes BRAF-mediated phosphorylation of MAP2K1/MEK1 and/or MAP2K2/MEK2. Promotes activation of MAPK1 and/or MAPK3, both in response to EGF and to cAMP. Its kinase activity is unsure. Some protein kinase activity has been detected in vitro, however the physiological relevance of this activity is unknown. This is Kinase suppressor of Ras 1 (Ksr1) from Mus musculus (Mouse).